A 188-amino-acid polypeptide reads, in one-letter code: Peptidyl-tRNA hydrolase (188 aa).

Phe15 contributes to the tRNA binding site. The Proton acceptor role is filled by His20. Positions 64, 66, and 112 each coordinate tRNA.

This sequence belongs to the PTH family. Monomer.

It localises to the cytoplasm. The catalysed reaction is an N-acyl-L-alpha-aminoacyl-tRNA + H2O = an N-acyl-L-amino acid + a tRNA + H(+). Functionally, hydrolyzes ribosome-free peptidyl-tRNAs (with 1 or more amino acids incorporated), which drop off the ribosome during protein synthesis, or as a result of ribosome stalling. Its function is as follows. Catalyzes the release of premature peptidyl moieties from peptidyl-tRNA molecules trapped in stalled 50S ribosomal subunits, and thus maintains levels of free tRNAs and 50S ribosomes. This Borreliella burgdorferi (strain ATCC 35210 / DSM 4680 / CIP 102532 / B31) (Borrelia burgdorferi) protein is Peptidyl-tRNA hydrolase.